We begin with the raw amino-acid sequence, 185 residues long: Large ribosomal subunit protein uL5 (185 aa).

Belongs to the universal ribosomal protein uL5 family. As to quaternary structure, part of the 50S ribosomal subunit; part of the 5S rRNA/L5/L18/L25 subcomplex. Contacts the 5S rRNA and the P site tRNA. Forms a bridge to the 30S subunit in the 70S ribosome.

Its function is as follows. This is one of the proteins that bind and probably mediate the attachment of the 5S RNA into the large ribosomal subunit, where it forms part of the central protuberance. In the 70S ribosome it contacts protein S13 of the 30S subunit (bridge B1b), connecting the 2 subunits; this bridge is implicated in subunit movement. Contacts the P site tRNA; the 5S rRNA and some of its associated proteins might help stabilize positioning of ribosome-bound tRNAs. This is Large ribosomal subunit protein uL5 from Bartonella tribocorum (strain CIP 105476 / IBS 506).